The chain runs to 525 residues: Cytochrome P450 monooxygenase ltmJ (525 aa).

A helical transmembrane segment spans residues 21–43 (LTWWQTIVSFIIFCIMCSWLPGN). N-linked (GlcNAc...) asparagine glycosylation is present at asparagine 136. A heme-binding site is contributed by cysteine 465.

This sequence belongs to the cytochrome P450 family. Heme serves as cofactor.

It is found in the membrane. It participates in secondary metabolite biosynthesis. Cytochrome P450 monooxygenase; part of the gene clusters that mediates the biosynthesis of lolitrems, indole-diterpene mycotoxins that are potent tremorgens in mammals, and are synthesized by clavicipitaceous fungal endophytes in association with their grass hosts. The geranylgeranyl diphosphate (GGPP) synthase ltmG is proposed to catalyze the first step in lolitrem biosynthesis. LtmG catalyzes a series of iterative condensations of isopentenyl diphosphate (IPP) with dimethylallyl diphosphate (DMAPP), geranyl diphosphate (GPP), and farnesyl diphosphate (FPP), to form GGPP. GGPP then condenses with indole-3-glycerol phosphate to form 3-geranylgeranylindole, an acyclic intermediate, to be incorporated into paxilline. Either ltmG or ltmC could be responsible for this step, as both are putative prenyl transferases. The FAD-dependent monooxygenase ltmM then catalyzes the epoxidation of the two terminal alkenes of the geranylgeranyl moiety, which is subsequently cyclized by ltmB, to paspaline. The cytochrome P450 monooxygenases ltmQ and ltmP can sequentially oxidize paspaline to terpendole E and terpendole F. Alternatively, ltmP converts paspaline to an intermediate which is oxidized by ltmQ to terpendole F. LtmF, ltmK, ltmE and ltmJ appear to be unique to the epichloe endophytes. The prenyltransferase ltmF is involved in the 27-hydroxyl-O-prenylation. The cytochrome P450 monooxygenase ltmK is required for the oxidative acetal ring formation. The multi-functional prenyltransferase ltmE is required for C20- and C21-prenylations of the indole ring of paspalanes and acts together with the cytochrome P450 monooxygenase ltmJ to yield lolitremanes by multiple oxidations and ring closures. The stereoisomer pairs of lolitriol and lolitrem N or lolitrem B and lolitrem F may be attributed to variations in the way in which ring closure can occur under the action of ltmJ. While the major product of this pathway is lolitrem B, the prenyl transferases and cytochrome P450 monooxygenases identified in this pathway have a remarkable versatility in their regio- and stereo-specificities to generate a diverse range of metabolites that are products of a metabolic grid rather than a linear pathway. The chain is Cytochrome P450 monooxygenase ltmJ (ltmJ) from Epichloe festucae var. lolii (Neotyphodium lolii).